The chain runs to 449 residues: Endoglucanase A (449 aa).

Residues 1–31 constitute a signal peptide (tat-type signal); that stretch reads MSTRRTAAALLAAAAVAVGGLTALTTTAAQA. Residues 32–137 form the CBM2 domain; the sequence is APGCRVDYAV…SLNGTTCTGT (106 aa). The cysteines at positions 35 and 134 are disulfide-linked. Residues 127–170 form a disordered region; sequence FSLNGTTCTGTVPTTSPTPTPTPTTPTPTPTPTPTPTPTVTPQP. A compositionally biased stretch (low complexity) spans 132–141; the sequence is TTCTGTVPTT. A linker ('hinge') (Pro-Thr box) region spans residues 139 to 168; that stretch reads PTTSPTPTPTPTTPTPTPTPTPTPTPTVTP. Pro residues predominate over residues 142–167; sequence SPTPTPTPTTPTPTPTPTPTPTPTVT. Asp247 is an active-site residue. Disulfide bonds link Cys248/Cys291 and Cys390/Cys426. Asp283 acts as the Proton donor in catalysis. The Nucleophile role is filled by Asp423. The tract at residues 438 to 449 is catalytic; it reads EIALEMARNARW.

This sequence belongs to the glycosyl hydrolase 6 (cellulase B) family. The linker region (also termed 'hinge') may be a potential site for proteolysis. Post-translationally, predicted to be exported by the Tat system. The position of the signal peptide cleavage has not been experimentally proven.

The catalysed reaction is Endohydrolysis of (1-&gt;4)-beta-D-glucosidic linkages in cellulose, lichenin and cereal beta-D-glucans.. Functionally, the biological conversion of cellulose to glucose generally requires three types of hydrolytic enzymes: (1) Endoglucanases which cut internal beta-1,4-glucosidic bonds; (2) Exocellobiohydrolases that cut the disaccharide cellobiose from the non-reducing end of the cellulose polymer chain; (3) Beta-1,4-glucosidases which hydrolyze the cellobiose and other short cello-oligosaccharides to glucose. This is Endoglucanase A (cenA) from Cellulomonas fimi.